Reading from the N-terminus, the 158-residue chain is Transcription elongation factor GreA (158 aa).

Belongs to the GreA/GreB family.

Necessary for efficient RNA polymerase transcription elongation past template-encoded arresting sites. The arresting sites in DNA have the property of trapping a certain fraction of elongating RNA polymerases that pass through, resulting in locked ternary complexes. Cleavage of the nascent transcript by cleavage factors such as GreA or GreB allows the resumption of elongation from the new 3'terminus. GreA releases sequences of 2 to 3 nucleotides. This chain is Transcription elongation factor GreA, found in Rhizobium leguminosarum bv. trifolii (strain WSM2304).